A 425-amino-acid polypeptide reads, in one-letter code: Orexin/Hypocretin receptor type 1 (425 aa).

A disordered region spans residues 1 to 25; it reads MEPSATPGPQMGVPTEGRERSPEPP. Residues 1-46 lie on the Extracellular side of the membrane; that stretch reads MEPSATPGPQMGVPTEGRERSPEPPDYEDEFLRYLWRDYLYPKQYE. The segment at 26–41 is required for response to orexin-A; that stretch reads DYEDEFLRYLWRDYLY. The helical transmembrane segment at 47 to 67 threads the bilayer; that stretch reads WVLIAAYVAVFFVALVGNTLV. The Cytoplasmic portion of the chain corresponds to 68–82; it reads CLAVWRNHHMRTVTN. A helical membrane pass occupies residues 83 to 105; that stretch reads YFIVNLSLADVLVTAICLPASLL. Residues 106–119 are Extracellular-facing; the sequence is VDITESWLFGHALC. A disulfide bond links Cys119 and Cys202. Residues 120-140 traverse the membrane as a helical segment; it reads KVIPYLQAVSVSVAVLTLSFI. The Cytoplasmic portion of the chain corresponds to 141-160; the sequence is ALDRWYAICHPLLFKSTARR. A helical transmembrane segment spans residues 161-182; it reads ARGSILGIWAVSLAVMVPQAAV. Topologically, residues 183–213 are extracellular; sequence MECSSVLPELANRTRLFSVCDERWADDLYPK. N-linked (GlcNAc...) asparagine glycosylation occurs at Asn194. The chain crosses the membrane as a helical span at residues 214 to 235; that stretch reads IYHSCFFIVTYLAPLGLMAMAY. Residues 236-298 are Cytoplasmic-facing; that stretch reads FQIFRKLWGR…QMRARRKTAK (63 aa). Residues 299–321 form a helical membrane-spanning segment; the sequence is MLMVVLLVFALCYLPISVLNVLK. At 322-336 the chain is on the extracellular side; it reads RVFGMFRQASDREAV. A helical membrane pass occupies residues 337–360; it reads YACFTFSHWLVYANSAANPIIYNF. The Cytoplasmic segment spans residues 361–425; that stretch reads LSGKFREQFK…LLTSVTTVLP (65 aa).

This sequence belongs to the G-protein coupled receptor 1 family.

It is found in the cell membrane. In terms of biological role, moderately selective excitatory receptor for orexin-A and, with a lower affinity, for orexin-B neuropeptide. Triggers an increase in cytoplasmic Ca(2+) levels in response to orexin-A binding. This Bos taurus (Bovine) protein is Orexin/Hypocretin receptor type 1.